The sequence spans 214 residues: 3-isopropylmalate dehydratase small subunit (214 aa).

Belongs to the LeuD family. LeuD type 1 subfamily. Heterodimer of LeuC and LeuD.

It carries out the reaction (2R,3S)-3-isopropylmalate = (2S)-2-isopropylmalate. Its pathway is amino-acid biosynthesis; L-leucine biosynthesis; L-leucine from 3-methyl-2-oxobutanoate: step 2/4. Catalyzes the isomerization between 2-isopropylmalate and 3-isopropylmalate, via the formation of 2-isopropylmaleate. The sequence is that of 3-isopropylmalate dehydratase small subunit from Pseudomonas fluorescens (strain ATCC BAA-477 / NRRL B-23932 / Pf-5).